Consider the following 339-residue polypeptide: Nicotinate-nucleotide--dimethylbenzimidazole phosphoribosyltransferase (339 aa).

The Proton acceptor role is filled by Glu-306.

Belongs to the CobT family.

It carries out the reaction 5,6-dimethylbenzimidazole + nicotinate beta-D-ribonucleotide = alpha-ribazole 5'-phosphate + nicotinate + H(+). Its pathway is nucleoside biosynthesis; alpha-ribazole biosynthesis; alpha-ribazole from 5,6-dimethylbenzimidazole: step 1/2. Catalyzes the synthesis of alpha-ribazole-5'-phosphate from nicotinate mononucleotide (NAMN) and 5,6-dimethylbenzimidazole (DMB). The sequence is that of Nicotinate-nucleotide--dimethylbenzimidazole phosphoribosyltransferase from Brucella canis (strain ATCC 23365 / NCTC 10854 / RM-666).